Consider the following 340-residue polypeptide: Phenylalanine--tRNA ligase alpha subunit (340 aa).

Glu-254 is a Mg(2+) binding site.

It belongs to the class-II aminoacyl-tRNA synthetase family. Phe-tRNA synthetase alpha subunit type 1 subfamily. In terms of assembly, tetramer of two alpha and two beta subunits. It depends on Mg(2+) as a cofactor.

The protein resides in the cytoplasm. The catalysed reaction is tRNA(Phe) + L-phenylalanine + ATP = L-phenylalanyl-tRNA(Phe) + AMP + diphosphate + H(+). This Caldicellulosiruptor saccharolyticus (strain ATCC 43494 / DSM 8903 / Tp8T 6331) protein is Phenylalanine--tRNA ligase alpha subunit.